Reading from the N-terminus, the 341-residue chain is Probable UDP-glucuronate 4-epimerase (341 aa).

Tyr-152 acts as the Proton acceptor in catalysis.

It belongs to the NAD(P)-dependent epimerase/dehydratase family. NAD(+) serves as cofactor.

The catalysed reaction is UDP-alpha-D-glucuronate = UDP-alpha-D-galacturonate. The sequence is that of Probable UDP-glucuronate 4-epimerase from Rhizobium meliloti (strain 1021) (Ensifer meliloti).